The chain runs to 246 residues: Sulfate transporter CysZ (246 aa).

The next 4 membrane-spanning stretches (helical) occupy residues 24–44 (LFVLIPLSINLLVFALLIGFA), 69–89 (IVWPLFVLLVLVIVFFTFTMV), 148–168 (LLVLSFVPGVNLVATPLWILF), and 214–234 (LLIPLVNLVMMPAAVAGATLF).

It belongs to the CysZ family.

Its subcellular location is the cell inner membrane. Its function is as follows. High affinity, high specificity proton-dependent sulfate transporter, which mediates sulfate uptake. Provides the sulfur source for the cysteine synthesis pathway. The polypeptide is Sulfate transporter CysZ (Pseudomonas paraeruginosa (strain DSM 24068 / PA7) (Pseudomonas aeruginosa (strain PA7))).